The sequence spans 50 residues: Protein hunchback (50 aa).

3 C2H2-type zinc fingers span residues 1–5, 11–33, and 39–50; these read HLRNH, FKCN…MKSH, and YRCADCTYATKY.

Belongs to the hunchback C2H2-type zinc-finger protein family.

Its subcellular location is the nucleus. In terms of biological role, gap class segmentation protein that controls development of head structures. This chain is Protein hunchback (hb), found in Platynereis dumerilii (Dumeril's clam worm).